A 55-amino-acid polypeptide reads, in one-letter code: Transcriptional regulator CdrS (55 aa).

It belongs to the CdrS family.

Its subcellular location is the cytoplasm. Its function is as follows. Transcriptional regulator which plays a central role in the regulation of cell division. Activates the expression of the gene encoding the cell division protein FtsZ2, and of other genes encoding proteins predicted to function in critical aspects of cell division. Required for normal cell division but not for cell elongation. May act during the transition from stasis to growth. The CdrSL-FtsZ2 transcriptional network might coordinate cell division timing with cell growth. In Halobacterium salinarum (strain ATCC 700922 / JCM 11081 / NRC-1) (Halobacterium halobium), this protein is Transcriptional regulator CdrS.